The following is a 147-amino-acid chain: Phosphoribosyl-AMP cyclohydrolase (147 aa).

Aspartate 97 contacts Mg(2+). Cysteine 98 serves as a coordination point for Zn(2+). 2 residues coordinate Mg(2+): aspartate 99 and aspartate 101. Cysteine 114 and cysteine 121 together coordinate Zn(2+).

This sequence belongs to the PRA-CH family. In terms of assembly, homodimer. It depends on Mg(2+) as a cofactor. The cofactor is Zn(2+).

It localises to the cytoplasm. It carries out the reaction 1-(5-phospho-beta-D-ribosyl)-5'-AMP + H2O = 1-(5-phospho-beta-D-ribosyl)-5-[(5-phospho-beta-D-ribosylamino)methylideneamino]imidazole-4-carboxamide. It functions in the pathway amino-acid biosynthesis; L-histidine biosynthesis; L-histidine from 5-phospho-alpha-D-ribose 1-diphosphate: step 3/9. Functionally, catalyzes the hydrolysis of the adenine ring of phosphoribosyl-AMP. This Hydrogenovibrio crunogenus (strain DSM 25203 / XCL-2) (Thiomicrospira crunogena) protein is Phosphoribosyl-AMP cyclohydrolase.